We begin with the raw amino-acid sequence, 342 residues long: Ketol-acid reductoisomerase (NADP(+)) (342 aa).

Residues 2 to 181 (VKVYYNGDIQ…GGARAGVLET (180 aa)) form the KARI N-terminal Rossmann domain. NADP(+) contacts are provided by residues 25–28 (YGSQ), Arg-48, Ser-52, and 82–85 (DEQQ). His-107 is a catalytic residue. Gly-133 is an NADP(+) binding site. Positions 182-327 (TFKEETETDL…RKLREMMPFV (146 aa)) constitute a KARI C-terminal knotted domain. Residues Asp-190, Glu-194, Glu-226, and Glu-230 each contribute to the Mg(2+) site. Residue Ser-251 coordinates substrate.

It belongs to the ketol-acid reductoisomerase family. Mg(2+) serves as cofactor.

The enzyme catalyses (2R)-2,3-dihydroxy-3-methylbutanoate + NADP(+) = (2S)-2-acetolactate + NADPH + H(+). The catalysed reaction is (2R,3R)-2,3-dihydroxy-3-methylpentanoate + NADP(+) = (S)-2-ethyl-2-hydroxy-3-oxobutanoate + NADPH + H(+). The protein operates within amino-acid biosynthesis; L-isoleucine biosynthesis; L-isoleucine from 2-oxobutanoate: step 2/4. Its pathway is amino-acid biosynthesis; L-valine biosynthesis; L-valine from pyruvate: step 2/4. Involved in the biosynthesis of branched-chain amino acids (BCAA). Catalyzes an alkyl-migration followed by a ketol-acid reduction of (S)-2-acetolactate (S2AL) to yield (R)-2,3-dihydroxy-isovalerate. In the isomerase reaction, S2AL is rearranged via a Mg-dependent methyl migration to produce 3-hydroxy-3-methyl-2-ketobutyrate (HMKB). In the reductase reaction, this 2-ketoacid undergoes a metal-dependent reduction by NADPH to yield (R)-2,3-dihydroxy-isovalerate. The polypeptide is Ketol-acid reductoisomerase (NADP(+)) (Bacillus pumilus (strain SAFR-032)).